Consider the following 318-residue polypeptide: Olfactory receptor 10H1 (318 aa).

The Extracellular segment spans residues 1–25 (MQRANHSTVTQFILVGFSVFPHLQL). An N-linked (GlcNAc...) asparagine glycan is attached at asparagine 5. The helical transmembrane segment at 26 to 46 (MLFLLFLLMYLFTLLGNLLIM) threads the bilayer. Residues 47–54 (ATVWSERS) are Cytoplasmic-facing. A helical membrane pass occupies residues 55–75 (LHTPMYLFLCALSVSEILYTV). Over 76-99 (AIIPRMLADLLSTQRSIAFLACAS) the chain is Extracellular. Residues cysteine 97 and cysteine 189 are joined by a disulfide bond. Residues 100-120 (QMFFSFSFGFTHSFLLTVMGY) form a helical membrane-spanning segment. The Cytoplasmic portion of the chain corresponds to 121–139 (DRYVAICHPLRYNVLMSPR). A helical membrane pass occupies residues 140–160 (GCACLVGCSWAGGLVMGMVVT). The Extracellular portion of the chain corresponds to 161 to 197 (SAIFHLAFCGHKEIHHFACHVPPLLKLACGDDVLVVA). Residues 198–218 (KGVGLVCITALLGCFLLILLS) traverse the membrane as a helical segment. Residues 219 to 238 (YAFIVAAILKIPSAEGRNKA) are Cytoplasmic-facing. The chain crosses the membrane as a helical span at residues 239-259 (FSTCASHLTVVVVHYGFASVI). Topologically, residues 260-272 (YLKPKSPQSLEGD) are extracellular. A helical transmembrane segment spans residues 273–293 (TLMGITYTVLTPFLSPIIFSL). The Cytoplasmic segment spans residues 294–318 (RNKELKVAMKKTFFSKLYPEKNVMM).

It belongs to the G-protein coupled receptor 1 family.

It is found in the cell membrane. Odorant receptor. The polypeptide is Olfactory receptor 10H1 (OR10H1) (Homo sapiens (Human)).